The primary structure comprises 160 residues: Leptin (160 aa).

The N-terminal stretch at 1–17 (MDYTLALALSLLQLSMC) is a signal peptide. Residues Cys109 and Cys160 are joined by a disulfide bond.

The protein belongs to the leptin family.

The protein localises to the secreted. May function as part of a signaling pathway that acts to regulate the size of the body fat depot. In Tetraodon nigroviridis (Spotted green pufferfish), this protein is Leptin (lep).